Here is a 311-residue protein sequence, read N- to C-terminus: 4-hydroxy-tetrahydrodipicolinate synthase (311 aa).

T51 provides a ligand contact to pyruvate. Y140 acts as the Proton donor/acceptor in catalysis. The active-site Schiff-base intermediate with substrate is K168. I209 is a binding site for pyruvate.

It belongs to the DapA family. In terms of assembly, homotetramer; dimer of dimers.

The protein resides in the cytoplasm. The catalysed reaction is L-aspartate 4-semialdehyde + pyruvate = (2S,4S)-4-hydroxy-2,3,4,5-tetrahydrodipicolinate + H2O + H(+). It functions in the pathway amino-acid biosynthesis; L-lysine biosynthesis via DAP pathway; (S)-tetrahydrodipicolinate from L-aspartate: step 3/4. Its function is as follows. Catalyzes the condensation of (S)-aspartate-beta-semialdehyde [(S)-ASA] and pyruvate to 4-hydroxy-tetrahydrodipicolinate (HTPA). This Streptococcus pneumoniae (strain ATCC 700669 / Spain 23F-1) protein is 4-hydroxy-tetrahydrodipicolinate synthase.